Reading from the N-terminus, the 341-residue chain is S-adenosylmethionine:tRNA ribosyltransferase-isomerase (341 aa).

The protein belongs to the QueA family. Monomer.

Its subcellular location is the cytoplasm. The enzyme catalyses 7-aminomethyl-7-carbaguanosine(34) in tRNA + S-adenosyl-L-methionine = epoxyqueuosine(34) in tRNA + adenine + L-methionine + 2 H(+). It functions in the pathway tRNA modification; tRNA-queuosine biosynthesis. Its function is as follows. Transfers and isomerizes the ribose moiety from AdoMet to the 7-aminomethyl group of 7-deazaguanine (preQ1-tRNA) to give epoxyqueuosine (oQ-tRNA). This is S-adenosylmethionine:tRNA ribosyltransferase-isomerase from Staphylococcus aureus (strain USA300).